A 498-amino-acid polypeptide reads, in one-letter code: Tyrosine 3-monooxygenase (498 aa).

Residues 1–10 (MPTPSAPSPQ) are compositionally biased toward pro residues. The interval 1 to 31 (MPTPSAPSPQPKGFRRAVSEQDAKQAEAVTS) is disordered. Phosphoserine; by CaMK2 is present on Ser-19. Phosphoserine is present on Ser-31. Residue Ser-40 is modified to Phosphoserine; by CaMK2 and PKA. His-331, His-336, and Glu-376 together coordinate Fe cation. A Phosphoserine modification is found at Ser-472.

This sequence belongs to the biopterin-dependent aromatic amino acid hydroxylase family. In terms of assembly, homotetramer. Interacts (when phosphorylated at Ser-19) with YWHAG; one YWHAG dimer binds to one TH tetramer and this interaction may influence the phosphorylation and dephosphorylation of other sites. Interacts with NT5DC2; the interaction results in reduced phosphorylation and decreased catalytic activity of TH. The cofactor is Fe(2+). Phosphorylated on Ser-19, Ser-31 and Ser-40 by several protein kinases with different site specificities. Phosphorylation at Ser-31 and Ser-40 leads to an increase of TH activity. Phosphorylation at Ser-40 activates the enzyme and also counteracts the feedback inhibition of TH by catecholamines. Phosphorylation of Ser-19 and Ser-31 triggers the proteasomal degradation of TH through the ubiquitin-proteasome pathway. Phosphorylation at Ser-31 facilitates transport of TH from the soma to the nerve terminals via the microtubule network. Phosphorylation at Ser-19 induces the high-affinity binding to the 14-3-3 protein YWHAG; this interaction may influence the phosphorylation and dephosphorylation of other sites. Ser-19 increases the phosphorylation at Ser-40 in a hierarchical manner, leading to increased activity.

It is found in the cytoplasm. The protein resides in the perinuclear region. The protein localises to the nucleus. It localises to the cell projection. Its subcellular location is the axon. It is found in the cytoplasmic vesicle. The protein resides in the secretory vesicle. The protein localises to the synaptic vesicle. It carries out the reaction (6R)-L-erythro-5,6,7,8-tetrahydrobiopterin + L-tyrosine + O2 = (4aS,6R)-4a-hydroxy-L-erythro-5,6,7,8-tetrahydrobiopterin + L-dopa. It functions in the pathway catecholamine biosynthesis; dopamine biosynthesis; dopamine from L-tyrosine: step 1/2. Inhibited in feedback fashion by the catecholamine neurotransmitters, especially by dopamine in competition with tetrahydrobiopterin. Phosphorylation of several Ser/Thr residues in the N-terminus regulates the catalytic activity. Ser-31 and Ser-40 are readily phosphorylated to activate the catalytic activity. A cysteine modification induced by N-ethylmaleimide (NEM), inhibits tyrosine 3-monooxygenase activity through the modification of the Cys-177. Its function is as follows. Catalyzes the conversion of L-tyrosine to L-dihydroxyphenylalanine (L-Dopa), the rate-limiting step in the biosynthesis of catecholamines, dopamine, noradrenaline, and adrenaline. Uses tetrahydrobiopterin and molecular oxygen to convert tyrosine to L-Dopa. In addition to tyrosine, is able to catalyze the hydroxylation of phenylalanine and tryptophan but with lower specificity. Positively regulates the regression of retinal hyaloid vessels during postnatal development. In Rattus norvegicus (Rat), this protein is Tyrosine 3-monooxygenase (Th).